A 150-amino-acid chain; its full sequence is MKARGPFCIRHAAADTFAMVVFCFVTGMIIEIFVSGMTFQQSLASRTLSIPVNIAIAWPYGVFRDYVLRQGRKISPTGWMKNLSDLVAYVLFQSPVYAAILFTVGASTDQIITAVATNALVSCGMGVLYGYFLDMCRRWFKVPGYTVSEG.

4 helical membrane-spanning segments follow: residues 17-37 (FAMV…VSGM), 48-68 (LSIP…DYVL), 86-106 (LVAY…TVGA), and 111-131 (IITA…LYGY).

The protein belongs to the AlaE exporter family.

It localises to the cell inner membrane. Functionally, exports L-alanine. This Vibrio cholerae serotype O1 (strain ATCC 39315 / El Tor Inaba N16961) protein is L-alanine exporter AlaE.